A 154-amino-acid polypeptide reads, in one-letter code: Probable chemoreceptor glutamine deamidase CheD (154 aa).

The protein belongs to the CheD family.

It catalyses the reaction L-glutaminyl-[protein] + H2O = L-glutamyl-[protein] + NH4(+). Its function is as follows. Probably deamidates glutamine residues to glutamate on methyl-accepting chemotaxis receptors (MCPs), playing an important role in chemotaxis. The sequence is that of Probable chemoreceptor glutamine deamidase CheD from Methanococcus vannielii (strain ATCC 35089 / DSM 1224 / JCM 13029 / OCM 148 / SB).